The chain runs to 303 residues: MRLRHVVSSLDLTRDDYFRIFELADKFSNVKKLNYLSGKVVSLAFFEPSTRTAQSFHTAAIKLGADVIGFASEESTSIAKGENLADTIRMLNNYSNCIVMRHKFDGAALFASEISDIPIINAGDGKHEHPTQALIDLYTIYKVFGEIDGRTFGLLGDLKYARTVNSLLRALTRFKPKKVFLISPSQLKVRREILDGLNYPVIETENPYDVIQDIDVLYVTRIQKERFVDEVEYEKVKESYVVDLKLVNMMKKDGIILHPLPRVTEIDRKVDKTTNAKYFYQASLAVPLRMALFYEVLGERKDD.

The carbamoyl phosphate site is built by R51 and T52. K80 provides a ligand contact to L-aspartate. Carbamoyl phosphate-binding residues include R101, H129, and Q132. L-aspartate contacts are provided by R162 and R221. Carbamoyl phosphate is bound by residues L260 and P261.

This sequence belongs to the aspartate/ornithine carbamoyltransferase superfamily. ATCase family. As to quaternary structure, heterooligomer of catalytic and regulatory chains.

The catalysed reaction is carbamoyl phosphate + L-aspartate = N-carbamoyl-L-aspartate + phosphate + H(+). Its pathway is pyrimidine metabolism; UMP biosynthesis via de novo pathway; (S)-dihydroorotate from bicarbonate: step 2/3. In terms of biological role, catalyzes the condensation of carbamoyl phosphate and aspartate to form carbamoyl aspartate and inorganic phosphate, the committed step in the de novo pyrimidine nucleotide biosynthesis pathway. The polypeptide is Aspartate carbamoyltransferase catalytic subunit (Saccharolobus islandicus (strain M.16.4 / Kamchatka #3) (Sulfolobus islandicus)).